The chain runs to 203 residues: LexA repressor (203 aa).

Positions 28–48 (VRELCDELGFKSPNTAHFHLK) form a DNA-binding region, H-T-H motif. Residues S122 and K159 each act as for autocatalytic cleavage activity in the active site.

This sequence belongs to the peptidase S24 family. In terms of assembly, homodimer.

It carries out the reaction Hydrolysis of Ala-|-Gly bond in repressor LexA.. In terms of biological role, represses a number of genes involved in the response to DNA damage (SOS response), including recA and lexA. In the presence of single-stranded DNA, RecA interacts with LexA causing an autocatalytic cleavage which disrupts the DNA-binding part of LexA, leading to derepression of the SOS regulon and eventually DNA repair. This chain is LexA repressor, found in Desulfatibacillum aliphaticivorans.